The chain runs to 384 residues: Prokineticin receptor 2 (384 aa).

Residues 1-53 lie on the Extracellular side of the membrane; that stretch reads MAAQNGNASFPANFSIPQEHASSLPFNFSYDDYDLPLDEDEDMTKTQTFFAAK. N-linked (GlcNAc...) asparagine glycans are attached at residues N7, N13, and N27. The chain crosses the membrane as a helical span at residues 54 to 74; that stretch reads IVIGVALVGIMLTCGIGNFVF. Residues 75–89 are Cytoplasmic-facing; the sequence is ITALTRYKKLRNLTN. Residues 90–110 form a helical membrane-spanning segment; sequence LLIANLAISDFLVAIICCPFE. At 111–137 the chain is on the extracellular side; it reads MDYYVVHQLSWEHGHVLCACINYLRTV. C128 and C208 are joined by a disulfide. A helical membrane pass occupies residues 138–158; the sequence is SLYVSTNALLAIAIDRYLAIV. The Cytoplasmic portion of the chain corresponds to 159–171; the sequence is HPLKPRMNYQTAS. A helical membrane pass occupies residues 172-192; that stretch reads FLIALVWMVSILISIPSAYFT. Residues 193 to 223 lie on the Extracellular side of the membrane; it reads KETVLFIVKNQKKIFCGQVWPVDQQLYYKSY. Residues 224-244 form a helical membrane-spanning segment; that stretch reads FLFVFGIEFLGPVFTMTLCYA. At 245–273 the chain is on the cytoplasmic side; the sequence is RISRELWFKAVPGFQTEQIRKRLRCRRKT. A helical membrane pass occupies residues 274 to 294; that stretch reads VLVLMCILTAYVLCWAPFYGF. Residues 295–313 are Extracellular-facing; the sequence is TIVRDFFPTVFVKEKHYLT. The helical transmembrane segment at 314–334 threads the bilayer; that stretch reads AFYVVECIAMSNSMINTVCFV. Topologically, residues 335-384 are cytoplasmic; sequence TVKNSTMKYFKKMLLLHWRPSHHGSKSSADLDLKTSRLPATEEVDCIRLK.

It belongs to the G-protein coupled receptor 1 family. In terms of assembly, homodimer.

Its subcellular location is the cell membrane. In terms of biological role, receptor for prokineticin 2. Exclusively coupled to the G(q) subclass of heteromeric G proteins. Activation leads to mobilization of calcium, stimulation of phosphoinositide turnover and activation of p44/p42 mitogen-activated protein kinase. This chain is Prokineticin receptor 2 (PROKR2), found in Bos taurus (Bovine).